The sequence spans 1759 residues: MASDYYQVEILHYLNPNLIWVEVLNSPNEISFEQLGVYGILPIDASLDVERPGLKLQRSEDWMPATAILMKNIFQNLEQVWFSPTHIDRRSSIFDNNIHKYGELIIKKNGVQLYLSKELVKAGLATEDPCQFHQYMSLGKIKTKLSNTETRAVIKNLEEYYRKSSKPKELWQKSVHQNTSIFHAGERLQALTVKNLERHNNRQNIMLLENKLKDLEQCKGSDEVSLGRGVCRVPSNKSEMVMLTNKRLKNRLELLSKINMKSDATDAVKSTKRNFSGDGQRKNFENDFESDDESVKKVSIANTINTSDGSANVVDKLLDEKQIDNVFNNKKQICYTESTRRNPVKKAACIVYGPPSINIDKLPLKEAPKMTKTVKWTPHVDCDKEASEVSFGDVDSHVKLDVKNLDKFHEIADRIEIEKTIPVDVNIHKDLYDSMINNKNESESKIMETANLKTEMKNLRKSSILQSKLKQFDKFNVSSNSAASESSTKSSMDSSRISDEDDLSSDDEMSEIMETFKLNLATPKKSEAKHTIDHIEVNNTKLNANPFKNLDGSKSVFVDKLTSPVLLVHTKRNNKVQPCSLLRDVPFGTSIHVVLRNMGIKHPTRLQTVSWGTILRGLSTFLISPPRSGKTMGYLPAVCRLVRDFRKESPDSCGPKCIIVCATSKSVSEVERISKMLLGLEDKVFACYSGMDNLSVTTALLNGCDLLICTPKSIVRLLQNDLSVDLRDLTTFVVDDCERISDVYSNEVKYVLYEIKNMLKNRVNKELKVQIVVASRIWCDFLEPIVLKAPDSVVCIGAFQELILYSKISTTVDFLRPENKIANVLQFIDSVQGPKRTVVVCRADNEVKAVESSLRYNNRVVFACDNTMNIHDLYNLNVVWGDFEDPTLGPILVCCDSNLVHLNVTDASYLIHYSLPALFSTFCKRFSVLNDNYPSIFKNESRDLKVKVLMDESNVEQLPKILNFLKRCTENVPKILDEVSEKILNEKDLAKVKDLVPLCDNLLSLGICPDTWNCTERHRIFKECDSPADWIPKNGVVTFQILYFHSAVMYSARLLSNTVDGETTKYPQTYSTLSLKMGMYFSKESSRRLHGIPMVGDVCAVSKKQNFFIRCQVVKIISFYKNGNPNYVVIKLIDEEKFEQSRDIYLYHLPDEFKDMKTYVVQVRLANIQPQDKDITFSCLAKNELEKIVEKNEDLFMRGHVAMSVGSCIFVDTLEACLDLSSLSETVVRHNFKQELLNAHAVPNPKHLSILEEMCEKSGLIVKAVTNEQVVPKPIPVLPAAQWAHLEDDLSSVYLASVEDMDKLFVRLVKFESCMKLLNIEINKYVSENTVPLDGSNVGDIVLAKFPDDSMYERARIDHIYSEDKVKCFFVDQGDWRDVSTNDLATITENFITQLPFQAIECRLIGIRPFGEQWTEFSTNWFSDHCFEDAKGNLKHLYVKHFTKEKADCTGGHKYGVALIDTYTNEDIIVNQLLIDLNLAKENVDEIAYLSEIKCNKTVLNNDATVDEEEGSLSGVSEPESNINVPLDKVFLKAPIRSVPLVDSEYETSDSDTWQINRPEDFKALFMRTRPESSKIIPMITANEVQNNADGETSKDTSTILEEKGQLPEKVKDDELKLSKPKICWSQNKNTVKLKILIAGIEDYKLKIEDRAVAFSANHCDVEYGFKLELYGVVDVNKSRHSNKGQYVLVTMTKLMCRNWLALTKEGDSQKWIVYDVDTIEASSDEEVYRDDTLEVIKNIHNTNNGSDSEDDDFLDDVS.

Residues 74–153 (FQNLEQVWFS…KLSNTETRAV (80 aa)) form the Tudor 1 domain. A compositionally biased stretch (low complexity) spans 480-495 (NSAASESSTKSSMDSS). A disordered region spans residues 480–506 (NSAASESSTKSSMDSSRISDEDDLSSD). One can recognise a Helicase ATP-binding domain in the interval 611-789 (WGTILRGLST…DFLEPIVLKA (179 aa)). 624–631 (SPPRSGKT) provides a ligand contact to ATP. In terms of domain architecture, Helicase C-terminal spans 823–980 (NVLQFIDSVQ…NVPKILDEVS (158 aa)). Residues 1335-1394 (GSNVGDIVLAKFPDDSMYERARIDHIYSEDKVKCFFVDQGDWRDVSTNDLATITENFITQ) enclose the Tudor 2 domain. One can recognise a CS domain in the interval 1618-1704 (LSKPKICWSQ…LMCRNWLALT (87 aa)).

Interacts (via Tudor domain 2) with Siwi. Component of the PET complex, at least composed of EXD1, SIWI, TDRD12 and piRNAs. Expressed in the yolk cells. Not detected in yolk granules.

The protein localises to the chromosome. It is found in the cytoplasm. Its subcellular location is the cytosol. The protein resides in the nucleus membrane. The catalysed reaction is ATP + H2O = ADP + phosphate + H(+). Probable ATP-binding RNA helicase required during spermatogenesis to repress transposable elements and preventing their mobilization, which is essential for the germline integrity. Acts via the piRNA metabolic process, which mediates the repression of transposable elements during meiosis by forming complexes composed of piRNAs and Piwi proteins and governs the methylation and subsequent repression of transposons. This chain is Putative ATP-dependent RNA helicase TDRD12 (TDRD12), found in Bombyx mori (Silk moth).